We begin with the raw amino-acid sequence, 957 residues long: Glycine dehydrogenase (decarboxylating) (957 aa).

An N6-(pyridoxal phosphate)lysine modification is found at lysine 708.

This sequence belongs to the GcvP family. In terms of assembly, the glycine cleavage system is composed of four proteins: P, T, L and H. The cofactor is pyridoxal 5'-phosphate.

The catalysed reaction is N(6)-[(R)-lipoyl]-L-lysyl-[glycine-cleavage complex H protein] + glycine + H(+) = N(6)-[(R)-S(8)-aminomethyldihydrolipoyl]-L-lysyl-[glycine-cleavage complex H protein] + CO2. In terms of biological role, the glycine cleavage system catalyzes the degradation of glycine. The P protein binds the alpha-amino group of glycine through its pyridoxal phosphate cofactor; CO(2) is released and the remaining methylamine moiety is then transferred to the lipoamide cofactor of the H protein. The chain is Glycine dehydrogenase (decarboxylating) from Shigella sonnei (strain Ss046).